Reading from the N-terminus, the 65-residue chain is Large ribosomal subunit protein bL28 (65 aa).

The tract at residues 1-21 is disordered; sequence MPGRDQLTGQKALSGNKRSHA.

Belongs to the bacterial ribosomal protein bL28 family.

This chain is Large ribosomal subunit protein bL28, found in Metamycoplasma arthritidis (strain 158L3-1) (Mycoplasma arthritidis).